The following is a 43-amino-acid chain: Photosystem I reaction center subunit IX (43 aa).

A helical membrane pass occupies residues 7–27 (YLSVAPVLSALWFGALAGLLI).

The protein belongs to the PsaJ family.

It is found in the plastid. The protein localises to the chloroplast thylakoid membrane. Its function is as follows. May help in the organization of the PsaE and PsaF subunits. The chain is Photosystem I reaction center subunit IX from Oenothera argillicola (Appalachian evening primrose).